The primary structure comprises 378 residues: Ret finger protein-like 2 (378 aa).

Residues Cys101–Ser143 form an RING-type; degenerate zinc finger. The B30.2/SPRY domain occupies Glu168–Leu362.

As to expression, seems to be expressed in prostate and less abundantly in adult brain, fetal liver, and fetal kidney.

In Homo sapiens (Human), this protein is Ret finger protein-like 2 (RFPL2).